Here is a 530-residue protein sequence, read N- to C-terminus: NMDA receptor synaptonuclear signaling and neuronal migration factor (530 aa).

The N-myristoyl glycine moiety is linked to residue glycine 2. Residues 2–233 (GAAASRRRAL…FSFQTATTTM (232 aa)) are necessary and sufficient to elicit dendritic processes and synaptic contacts. 2 disordered regions span residues 34–67 (SQSH…APQN) and 125–197 (KGRR…GRRK). Residues 38–48 (PENRNGADHLL) show a composition bias toward basic and acidic residues. Basic residues predominate over residues 125–137 (KGRRQRHPHHHSQ). The span at 153–162 (PCQSWAGSRQ) shows a compositional bias: polar residues. Serine 204 carries the phosphoserine modification. Residues 247–250 (RRKR) carry the Nuclear localization signal motif. The disordered stretch occupies residues 285–312 (RSFSRSWSDPTPMKADTSHDSRDSSDLQ). Residues serine 290 and serine 292 each carry the phosphoserine modification. Positions 300 to 309 (DTSHDSRDSS) are enriched in basic and acidic residues.

It belongs to the NSMF family. As to quaternary structure, interacts with KPNA1; the interaction occurs in a calcium-independent manner after synaptic NMDA receptor stimulation and is required for nuclear import of NSMF but is competed by CABP1. Interacts (via the central NLS-containing motif region) with CABP1 (via EF-hands 1 and 2); the interaction occurs in a calcium-dependent manner after synaptic NMDA receptor stimulation and prevents the nuclear import of NSMF. Cannot be competed by calmodulin. In terms of processing, proteolytically processed after NMDA receptor activation. Cleaved in a calcium-dependent and calpain-sensitive manner. Calpain cleavage is essential for the translocation process from dendrites to the nucleus. Highly expressed in adult and fetal brain. Weakly expressed in heart, liver, spleen, testis, small intestine, skeletal muscle, peripheral white blood cells and kidney.

The protein resides in the nucleus. The protein localises to the nucleus envelope. It localises to the nucleus membrane. Its subcellular location is the nucleus matrix. It is found in the cytoplasm. The protein resides in the cell cortex. The protein localises to the cytoskeleton. It localises to the cell membrane. Its subcellular location is the cell projection. It is found in the dendrite. The protein resides in the synapse. The protein localises to the synaptosome. It localises to the postsynaptic density. Its subcellular location is the membrane. In terms of biological role, couples NMDA-sensitive glutamate receptor signaling to the nucleus and triggers long-lasting changes in the cytoarchitecture of dendrites and spine synapse processes. Part of the cAMP response element-binding protein (CREB) shut-off signaling pathway. Stimulates outgrowth of olfactory axons and migration of gonadotropin-releasing hormone (GnRH) and luteinizing-hormone-releasing hormone (LHRH) neuronal cells. The chain is NMDA receptor synaptonuclear signaling and neuronal migration factor (NSMF) from Homo sapiens (Human).